The chain runs to 46 residues: MQVLSSLKTAKTRHPDCKIVSRRGRLYVICKSNPRFKAVQGKKKRR.

The protein belongs to the bacterial ribosomal protein bL36 family.

The polypeptide is Large ribosomal subunit protein bL36 (Photorhabdus laumondii subsp. laumondii (strain DSM 15139 / CIP 105565 / TT01) (Photorhabdus luminescens subsp. laumondii)).